We begin with the raw amino-acid sequence, 747 residues long: Rho GTPase-activating protein 24 (747 aa).

Disordered stretches follow at residues M1–K20 and F327–S475. The PH domain maps to K17 to W123. Residues Q133 to F327 form the Rho-GAP domain. Composition is skewed to polar residues over residues Q334 to N346 and G355 to E367. Phosphoserine is present on residues S368, S390, S395, S397, S401, S412, S414, and S436. Positions S368–S380 are enriched in basic and acidic residues. Over residues P381–N404 the composition is skewed to polar residues. Residues I431–S475 show a composition bias toward polar residues. T451 is subject to Phosphothreonine. A Phosphoserine modification is found at S494. The tract at residues D581 to N639 is disordered. Residues D599–S614 show a composition bias toward basic and acidic residues. Over residues G616 to S629 the composition is skewed to low complexity. The segment covering E630–N639 has biased composition (polar residues). Residues S648–F728 adopt a coiled-coil conformation.

As to quaternary structure, interacts with FLNA. Phosphorylated by ROCK, leading to activate the RacGAP activity.

It localises to the cytoplasm. Its subcellular location is the cytoskeleton. It is found in the cell junction. The protein localises to the adherens junction. The protein resides in the focal adhesion. It localises to the cell projection. Functionally, rho GTPase-activating protein involved in cell polarity, cell morphology and cytoskeletal organization. Acts as a GTPase activator for the Rac-type GTPase by converting it to an inactive GDP-bound state. Controls actin remodeling by inactivating Rac downstream of Rho leading to suppress leading edge protrusion and promotes cell retraction to achieve cellular polarity. Able to suppress RAC1 and CDC42 activity in vitro. Overexpression induces cell rounding with partial or complete disruption of actin stress fibers and formation of membrane ruffles, lamellipodia, and filopodia. Isoform 2 is a vascular cell-specific GAP involved in modulation of angiogenesis. The protein is Rho GTPase-activating protein 24 (Arhgap24) of Mus musculus (Mouse).